Reading from the N-terminus, the 538-residue chain is Nucleobase-ascorbate transporter 7 (538 aa).

The segment covering 1 to 11 (MAGGGGGGGGV) has biased composition (gly residues). The disordered stretch occupies residues 1–20 (MAGGGGGGGGVAPPLKHDGL). 12 consecutive transmembrane segments (helical) span residues 45–65 (AILL…LIPT), 81–101 (MVQT…FFGT), 103–123 (LPAV…IILA), 143–163 (IQGA…SGLW), 166–186 (VVRL…GFGL), 191–211 (FPLL…LLLF), 229–249 (FAVI…TVGG), 295–315 (FAMM…YIVV), 372–394 (VVQI…AIFA), 398–420 (APVV…LSLL), 432–452 (FILG…NQYT), and 471–491 (INVP…FLDV).

This sequence belongs to the nucleobase:cation symporter-2 (NCS2) (TC 2.A.40) family. In terms of tissue distribution, expressed exclusively in ovules.

It localises to the cell membrane. The sequence is that of Nucleobase-ascorbate transporter 7 (NAT7) from Arabidopsis thaliana (Mouse-ear cress).